We begin with the raw amino-acid sequence, 1353 residues long: Adenylate cyclase type 9 (1353 aa).

Disordered stretches follow at residues 1–27 (MASP…DSNS) and 49–71 (SISS…GGGG). Residues 1 to 117 (MASPPHQQLL…CFPQTQRRFR (117 aa)) are Cytoplasmic-facing. The segment covering 16–27 (EVSCDSSGDSNS) has biased composition (polar residues). Residues 49–66 (SISSSCSSSGDSGGVPRR) are compositionally biased toward low complexity. A helical membrane pass occupies residues 118-138 (YALFYIGFACLLWSIYFAVHM). Over 139 to 141 (RSR) the chain is Extracellular. Residues 142–162 (LIVMVAPALCFLLVCVGFFLF) traverse the membrane as a helical segment. Residues 163–171 (TFTKLYARH) are Cytoplasmic-facing. Residues 172–192 (YAWTSLALTLLVFALTLAAQF) form a helical membrane-spanning segment. Over 193–215 (QVLTPVSGRGDSSNLTATARPTD) the chain is Extracellular. Residue asparagine 206 is glycosylated (N-linked (GlcNAc...) asparagine). A helical membrane pass occupies residues 216-235 (TCLSQVGSFSMCIEVLFLLY). Over 236-241 (TVMHLP) the chain is Cytoplasmic. Residues 242–259 (LYLSLCLGVAYSVLFETF) traverse the membrane as a helical segment. Topologically, residues 260 to 280 (GYHFRDEACFPSPGAGALHWE) are extracellular. The chain crosses the membrane as a helical span at residues 281–301 (LLSRGLLHGCIHAIGVHLFVM). The Cytoplasmic portion of the chain corresponds to 302 to 786 (SQVRSRSTFL…VKTFASPTFS (485 aa)). The interval 349-375 (QGDEESENSVKRHATSSPKNRKKKSSI) is disordered. Residues 359–374 (KRHATSSPKNRKKKSS) are compositionally biased toward basic residues. Residues 394–521 (SILFADIVGF…NDVNLANLME (128 aa)) enclose the Guanylate cyclase 1 domain. 3 residues coordinate Mg(2+): aspartate 399, isoleucine 400, and aspartate 443. Residues 399–404 (DIVGFT), 441–443 (LGD), and arginine 487 each bind ATP. Serine 610 is subject to Phosphoserine. Residues 642-684 (EAGAEGGAPQNGCQDEHKNSTKASGGPNPKTQNGLLSPPQEEK) are disordered. 3 positions are modified to phosphoserine: serine 688, serine 691, and serine 706. The helical transmembrane segment at 787-807 (SLLDVFLSTTVFLTLSTTCFL) threads the bilayer. Topologically, residues 808 to 818 (KYEAATVPPPP) are extracellular. The helical transmembrane segment at 819–839 (AALAVFSAALLLEVLSLAVSI) threads the bilayer. At 840–867 (RMVFFLEDVMACTKRLLEWIAGWLPRHC) the chain is on the cytoplasmic side. The chain crosses the membrane as a helical span at residues 868-888 (IGAILVSLPALAVYSHVTSEY). The Extracellular portion of the chain corresponds to 889–891 (ETN). The chain crosses the membrane as a helical span at residues 892 to 912 (IHFPVFTGSAALIAVVHYCNF). The Cytoplasmic portion of the chain corresponds to 913-920 (CQLSSWMR). Residues 921–941 (SSLATVVGAGPLLLLYVSLCP) form a helical membrane-spanning segment. Residues 942–975 (DSSVLTSPLDAVQNFSSERNPCNSSVPRDLRRPA) are Extracellular-facing. 2 N-linked (GlcNAc...) asparagine glycosylation sites follow: asparagine 955 and asparagine 964. A helical transmembrane segment spans residues 976–996 (SLIGQEVVLVFFLLLLLVWFL). Over 997-1353 (NREFEVSYRL…LTKLNVSKSV (357 aa)) the chain is Cytoplasmic. The 141-residue stretch at 1058–1198 (GVIFASIVNF…DTVNIASRMD (141 aa)) folds into the Guanylate cyclase 2 domain. ATP contacts are provided by residues lysine 1108, 1185–1187 (DIW), 1192–1196 (NIASR), and lysine 1232. 4 positions are modified to phosphoserine: serine 1257, serine 1259, serine 1295, and serine 1307. The segment covering 1292-1301 (SLGSDSSTQA) has biased composition (polar residues). The disordered stretch occupies residues 1292–1326 (SLGSDSSTQAKDAHLSPKRPWKEPVKAEERGRFGK). Positions 1302 to 1326 (KDAHLSPKRPWKEPVKAEERGRFGK) are enriched in basic and acidic residues.

The protein belongs to the adenylyl cyclase class-4/guanylyl cyclase family. It depends on Mg(2+) as a cofactor. Requires Mn(2+) as cofactor. Detected in skeletal muscle, pancreas, lung, heart, kidney, liver, brain and placenta. Expressed in multiple cells of the lung, with expression highest in airway smooth muscle.

The protein localises to the cell membrane. It carries out the reaction ATP = 3',5'-cyclic AMP + diphosphate. Insensitive to calcium/calmodulin, forskolin and somatostatin. Stimulated by beta-adrenergic receptor activation. Activity is down-regulated by calcium/calcineurin. Functionally, adenylyl cyclase that catalyzes the formation of the signaling molecule cAMP in response to activation of G protein-coupled receptors. Contributes to signaling cascades activated by CRH (corticotropin-releasing factor), corticosteroids and beta-adrenergic receptors. The polypeptide is Adenylate cyclase type 9 (ADCY9) (Homo sapiens (Human)).